Here is a 185-residue protein sequence, read N- to C-terminus: Probable chorismate pyruvate-lyase 2 (185 aa).

Positions 80, 118, and 170 each coordinate substrate.

The protein belongs to the UbiC family.

It localises to the cytoplasm. It carries out the reaction chorismate = 4-hydroxybenzoate + pyruvate. The protein operates within cofactor biosynthesis; ubiquinone biosynthesis. Functionally, removes the pyruvyl group from chorismate, with concomitant aromatization of the ring, to provide 4-hydroxybenzoate (4HB) for the ubiquinone pathway. This chain is Probable chorismate pyruvate-lyase 2, found in Pseudomonas entomophila (strain L48).